A 489-amino-acid polypeptide reads, in one-letter code: Protein P7 (489 aa).

2 RNA-binding regions span residues 129–251 (TSLI…GRML) and 321–351 (AGDY…FQVN).

Belongs to the phytoreovirus protein P7 family.

It is found in the virion. Its subcellular location is the host cytoplasm. Probable component of the transcriptional machinery present in the inner capsid. Displays dsRNA binding activity and may play an important role in the sorting of viral RNA and virion assembly. Together with the RNA-directed RNA polymerase P1 and capping enzyme P5, forms an transcriptional complex positioned near the channels situated at each of the five-fold vertices of the core. The sequence is that of Protein P7 from Rice gall dwarf virus (RGDV).